We begin with the raw amino-acid sequence, 150 residues long: Transcriptional repressor NrdR (150 aa).

Residues 3 to 34 (CPFCNFSDSKVVDSRPDKGGAAIRRRRECESC) fold into a zinc finger. The region spanning 49-139 (PLVTKRDGRR…VYRSFKDINE (91 aa)) is the ATP-cone domain.

Belongs to the NrdR family. The cofactor is Zn(2+).

Its function is as follows. Negatively regulates transcription of bacterial ribonucleotide reductase nrd genes and operons by binding to NrdR-boxes. This is Transcriptional repressor NrdR from Citrifermentans bemidjiense (strain ATCC BAA-1014 / DSM 16622 / JCM 12645 / Bem) (Geobacter bemidjiensis).